Consider the following 98-residue polypeptide: MSCYDLCRPCGPTPLANSCNEPCVRQCQDSRVVIQPSPVVVTLPGPILSSFPQNTAVGSSTSAAVGSILSEEGVPISCGGFGISGLGSRFSGRRCLPC.

S2 is modified (N-acetylserine).

The protein belongs to the avian keratin family. As to quaternary structure, the avian keratins (F-ker, S-ker, C-ker and B-ker) are a complex mixture of very similar polypeptides.

The polypeptide is Feather keratin 2 (Gallus gallus (Chicken)).